The primary structure comprises 242 residues: tRNA pseudouridine synthase A (242 aa).

Aspartate 51 serves as the catalytic Nucleophile. Position 107 (tyrosine 107) interacts with substrate.

It belongs to the tRNA pseudouridine synthase TruA family. As to quaternary structure, homodimer.

The enzyme catalyses uridine(38/39/40) in tRNA = pseudouridine(38/39/40) in tRNA. Functionally, formation of pseudouridine at positions 38, 39 and 40 in the anticodon stem and loop of transfer RNAs. The sequence is that of tRNA pseudouridine synthase A from Helicobacter pylori (strain ATCC 700392 / 26695) (Campylobacter pylori).